The chain runs to 390 residues: F-box/kelch-repeat protein At3g06570 (390 aa).

The F-box domain occupies 23 to 69 (SASFQSLPDDLILSIVARVPRLYHRTVSLVCKSFRSLLVSPELYKAR). Kelch repeat units lie at residues 140–183 (DIYN…VLDR), 185–234 (IFVV…CRTA), and 236–281 (IDGK…QIHN).

This is F-box/kelch-repeat protein At3g06570 from Arabidopsis thaliana (Mouse-ear cress).